The primary structure comprises 315 residues: Calcium homeostasis modulator protein 6 (315 aa).

At 1–21 the chain is on the cytoplasmic side; sequence MEKFRAVLDLHVKHHSALGYG. Residues 22-37 form a helical membrane-spanning segment; it reads LVTLLTAGGERIFSAV. Residues 38–46 lie on the Extracellular side of the membrane; the sequence is AFQCPCSAA. 3 disulfides stabilise this stretch: Cys41–Cys126, Cys43–Cys155, and Cys139–Cys146. Residues 47 to 68 traverse the membrane as a helical segment; that stretch reads WNLPYGLVFLLVPALALFLLGY. Over 69 to 102 the chain is Cytoplasmic; it reads VLSARTWRLLTGCCSSARASCGSALRGSLVCTQI. Residues 103–127 traverse the membrane as a helical segment; it reads SAAAALAPLTWVAVALLGGAFYECA. Topologically, residues 128–169 are extracellular; that stretch reads ATGSAAFAQRLCLGRNRSCAAELPLVPCNQAKASDVQDLLKD. Residues 170 to 192 traverse the membrane as a helical segment; it reads LKAQSQVLGWILIAVVIIILLIF. The Cytoplasmic portion of the chain corresponds to 193 to 315; sequence TSVTRCLSPV…SSGINSTPEL (123 aa).

This sequence belongs to the CALHM family. As to quaternary structure, oligomerizes to form decameric and undecameric channels. Post-translationally, N-glycosylated. Placenta.

It is found in the cell membrane. The enzyme catalyses ATP(in) = ATP(out). Functionally, pore-forming subunit of an ATP-permeable channel. In response to pathogen-derived and proinflammatory stimuli, relocates from intracellular compartments to NK-dendritic cell and NK-macrophage immune synapses where it mediates ATP efflux and NK cell activation involved in antimicrobial and antitumor responses. May assemble to form gap junction channel-like structures with gating and ion conductance likely regulated by membrane lipids and voltage rather than by extracellular calcium levels. The polypeptide is Calcium homeostasis modulator protein 6 (Homo sapiens (Human)).